A 262-amino-acid polypeptide reads, in one-letter code: MQALRTAASGMAAQQLNVEVISNNIANMNTVGFKRQRAEFQDLLYQTIERAGSQSSSDGNIVPTGVQVGGGVKAGSVYRITEQGTPTLTDSPLDLAIQGKGYMPILLPSGETAYTRAGNFSTNDQGQIVTEDGYLVQPGITIPQNATDITISKSGLVQVKLDGQPQPQTVGQIQLANFLNEGGLEAIGDNLFLETAASGAATLAAPGEPGFGMLLQHYTEASNVDAVSEITALITAQRAYEMNSKVISTADQMLQATSQLRS.

This sequence belongs to the flagella basal body rod proteins family. As to quaternary structure, the basal body constitutes a major portion of the flagellar organelle and consists of four rings (L,P,S, and M) mounted on a central rod. The rod consists of about 26 subunits of FlgG in the distal portion, and FlgB, FlgC and FlgF are thought to build up the proximal portion of the rod with about 6 subunits each.

It localises to the bacterial flagellum basal body. In Caulobacter vibrioides (strain ATCC 19089 / CIP 103742 / CB 15) (Caulobacter crescentus), this protein is Flagellar basal-body rod protein FlgG (flgG).